The sequence spans 153 residues: ATP synthase subunit b' (153 aa).

Residues 23-40 traverse the membrane as a helical segment; that stretch reads LMAIQVVALTYILNSLFF.

The protein belongs to the ATPase B chain family. As to quaternary structure, F-type ATPases have 2 components, F(1) - the catalytic core - and F(0) - the membrane proton channel. F(1) has five subunits: alpha(3), beta(3), gamma(1), delta(1), epsilon(1). F(0) has four main subunits: a(1), b(1), b'(1) and c(10-14). The alpha and beta chains form an alternating ring which encloses part of the gamma chain. F(1) is attached to F(0) by a central stalk formed by the gamma and epsilon chains, while a peripheral stalk is formed by the delta, b and b' chains.

It is found in the cellular thylakoid membrane. Its function is as follows. F(1)F(0) ATP synthase produces ATP from ADP in the presence of a proton or sodium gradient. F-type ATPases consist of two structural domains, F(1) containing the extramembraneous catalytic core and F(0) containing the membrane proton channel, linked together by a central stalk and a peripheral stalk. During catalysis, ATP synthesis in the catalytic domain of F(1) is coupled via a rotary mechanism of the central stalk subunits to proton translocation. In terms of biological role, component of the F(0) channel, it forms part of the peripheral stalk, linking F(1) to F(0). The b'-subunit is a diverged and duplicated form of b found in plants and photosynthetic bacteria. In Prochlorococcus marinus (strain AS9601), this protein is ATP synthase subunit b'.